Here is a 216-residue protein sequence, read N- to C-terminus: Vascular endothelial growth factor A (216 aa).

An N-terminal signal peptide occupies residues 1–26; it reads MNFLLTWIHWGLAALLYFHNAKVLQA. Intrachain disulfides connect Cys-52–Cys-94, Cys-83–Cys-128, and Cys-87–Cys-130. N-linked (GlcNAc...) asparagine glycosylation is present at Asn-101. The disordered stretch occupies residues 140-161; sequence QEKKSKREKGKGQKRKRKRGRY. Over residues 145 to 161 the composition is skewed to basic residues; it reads KREKGKGQKRKRKRGRY.

The protein belongs to the PDGF/VEGF growth factor family. As to quaternary structure, homodimer; disulfide-linked. Also found as heterodimer with PGF. Interacts to the FLT1/VEGFR1 and KDR/VEGFR2 receptors, heparan sulfate and heparin. In terms of tissue distribution, expressed in venom gland, heart, brain, liver, skeletal muscle and kidney.

Its subcellular location is the secreted. Growth factor active in angiogenesis, vasculogenesis and endothelial cell growth. Induces endothelial cell proliferation, promotes cell migration, inhibits apoptosis and induces permeabilization of blood vessels. In Protobothrops flavoviridis (Habu), this protein is Vascular endothelial growth factor A.